The following is a 344-amino-acid chain: Dihydroorotase (344 aa).

The Zn(2+) site is built by His-14 and His-16. Residues 16–18 (HVR) and Asn-42 contribute to the substrate site. Zn(2+) is bound by residues Lys-99, His-136, and His-174. Lys-99 carries the N6-carboxylysine modification. His-136 provides a ligand contact to substrate. Leu-219 is a binding site for substrate. Zn(2+) is bound at residue Asp-247. The active site involves Asp-247. Substrate is bound by residues His-251 and Ala-263.

Belongs to the metallo-dependent hydrolases superfamily. DHOase family. Class II DHOase subfamily. Homodimer. Zn(2+) serves as cofactor.

The catalysed reaction is (S)-dihydroorotate + H2O = N-carbamoyl-L-aspartate + H(+). It participates in pyrimidine metabolism; UMP biosynthesis via de novo pathway; (S)-dihydroorotate from bicarbonate: step 3/3. In terms of biological role, catalyzes the reversible cyclization of carbamoyl aspartate to dihydroorotate. This is Dihydroorotase from Leptothrix cholodnii (strain ATCC 51168 / LMG 8142 / SP-6) (Leptothrix discophora (strain SP-6)).